The following is a 182-amino-acid chain: Ribosome-recycling factor (182 aa).

The tract at residues 136–160 (VKKSEKDGDLSEDQSRDEQEKIQKE) is disordered.

Belongs to the RRF family.

It is found in the cytoplasm. Its function is as follows. Responsible for the release of ribosomes from messenger RNA at the termination of protein biosynthesis. May increase the efficiency of translation by recycling ribosomes from one round of translation to another. The chain is Ribosome-recycling factor from Prochlorococcus marinus (strain NATL1A).